The sequence spans 147 residues: Large ribosomal subunit protein uL13 (147 aa).

This sequence belongs to the universal ribosomal protein uL13 family. In terms of assembly, part of the 50S ribosomal subunit.

In terms of biological role, this protein is one of the early assembly proteins of the 50S ribosomal subunit, although it is not seen to bind rRNA by itself. It is important during the early stages of 50S assembly. The protein is Large ribosomal subunit protein uL13 of Corynebacterium diphtheriae (strain ATCC 700971 / NCTC 13129 / Biotype gravis).